Reading from the N-terminus, the 395-residue chain is Phosphopentomutase (395 aa).

Positions 13, 288, 293, 329, 330, and 341 each coordinate Mn(2+).

The protein belongs to the phosphopentomutase family. Mn(2+) is required as a cofactor.

The protein resides in the cytoplasm. It catalyses the reaction 2-deoxy-alpha-D-ribose 1-phosphate = 2-deoxy-D-ribose 5-phosphate. It carries out the reaction alpha-D-ribose 1-phosphate = D-ribose 5-phosphate. Its pathway is carbohydrate degradation; 2-deoxy-D-ribose 1-phosphate degradation; D-glyceraldehyde 3-phosphate and acetaldehyde from 2-deoxy-alpha-D-ribose 1-phosphate: step 1/2. Its function is as follows. Isomerase that catalyzes the conversion of deoxy-ribose 1-phosphate (dRib-1-P) and ribose 1-phosphate (Rib-1-P) to deoxy-ribose 5-phosphate (dRib-5-P) and ribose 5-phosphate (Rib-5-P), respectively. The polypeptide is Phosphopentomutase (Agathobacter rectalis (strain ATCC 33656 / DSM 3377 / JCM 17463 / KCTC 5835 / VPI 0990) (Eubacterium rectale)).